The following is a 510-amino-acid chain: ATP synthase subunit alpha (510 aa).

Position 170–177 (170–177) interacts with ATP; sequence GDRQTGKT.

It belongs to the ATPase alpha/beta chains family. As to quaternary structure, F-type ATPases have 2 components, CF(1) - the catalytic core - and CF(0) - the membrane proton channel. CF(1) has five subunits: alpha(3), beta(3), gamma(1), delta(1), epsilon(1). CF(0) has three main subunits: a(1), b(2) and c(9-12). The alpha and beta chains form an alternating ring which encloses part of the gamma chain. CF(1) is attached to CF(0) by a central stalk formed by the gamma and epsilon chains, while a peripheral stalk is formed by the delta and b chains.

Its subcellular location is the cell inner membrane. It carries out the reaction ATP + H2O + 4 H(+)(in) = ADP + phosphate + 5 H(+)(out). In terms of biological role, produces ATP from ADP in the presence of a proton gradient across the membrane. The alpha chain is a regulatory subunit. This is ATP synthase subunit alpha from Caulobacter sp. (strain K31).